A 122-amino-acid chain; its full sequence is MIQMQTMLEVADNTGARHVQCIKVLGGSKRRYASVGDIIKVSIKDAAPRGRVKKGDVYNAVVVRTAKGVRRPDGSLIKFDSNAAVLLNNKLEPIGTRIFGPVTRELRTERFMKIVSLAPEVL.

This sequence belongs to the universal ribosomal protein uL14 family. In terms of assembly, part of the 50S ribosomal subunit. Forms a cluster with proteins L3 and L19. In the 70S ribosome, L14 and L19 interact and together make contacts with the 16S rRNA in bridges B5 and B8.

Its function is as follows. Binds to 23S rRNA. Forms part of two intersubunit bridges in the 70S ribosome. The polypeptide is Large ribosomal subunit protein uL14 (Chromobacterium violaceum (strain ATCC 12472 / DSM 30191 / JCM 1249 / CCUG 213 / NBRC 12614 / NCIMB 9131 / NCTC 9757 / MK)).